The chain runs to 397 residues: Lymphoid enhancer-binding factor 1 (397 aa).

A CTNNB1-binding region spans residues 1-60 (MPQLSGGGGGGDPELCATDEMIPFKDEGDPQKEKIFAEISHPEEEGDLADIKSSLVNESE). Residue Lys-25 forms a Glycyl lysine isopeptide (Lys-Gly) (interchain with G-Cter in SUMO) linkage. Residues 59-102 (SEIIPASNGHEVVRQAPSSQEPYHDKAREHPDEGKHPDGGLYNK) are disordered. The span at 80 to 96 (PYHDKAREHPDEGKHPD) shows a compositional bias: basic and acidic residues. Ser-130 carries the post-translational modification Phosphoserine. Thr-153 is modified (phosphothreonine; by NLK). Ser-164 carries the post-translational modification Phosphoserine; by NLK. 2 disordered regions span residues 164-191 (SPGS…APEI) and 266-296 (VKQE…KRPH). Lys-267 is covalently cross-linked (Glycyl lysine isopeptide (Lys-Gly) (interchain with G-Cter in SUMO)). Over residues 267–294 (KQEHPHTDSDLMHVKPQHEQRKEQEPKR) the composition is skewed to basic and acidic residues. Residues 297-365 (IKKPLNAFML…LHMQLYPGWS (69 aa)) constitute a DNA-binding region (HMG box). A disordered region spans residues 367–397 (RDNYGKKKKRKREKLQESTSGTGPRMTAAYI).

It belongs to the TCF/LEF family. As to quaternary structure, binds the armadillo repeat of CTNNB1 and forms a stable complex. Binds TLE1, ALYREF/THOC4, MDFI and MDFIC. Interacts with NLK. Interacts with EP300 and PIASG. Interacts with DAZAP2. In terms of processing, phosphorylated at Thr-153 and/or Ser-164 by NLK. Phosphorylation by NLK at these sites represses LEF1-mediated transcriptional activation of target genes of the canonical Wnt signaling pathway. Expressed in Vgamma1.1 and Vgamma2 gamma-delta T-cells, however not expressed in gamma-delta thymocytes fated for Il17a expression (at protein level). Expressed in alpha-beta T-cell lineages. Expressed in the thymus. Found in distinct epithelial cell compartments of the skin and is abundant in the hair-producing progenitors of the follicle.

It is found in the nucleus. In terms of biological role, transcription factor that binds DNA in a sequence-specific manner. Participates in the Wnt signaling pathway. Activates transcription of target genes in the presence of CTNNB1 and EP300. PIASG antagonizes both Wnt-dependent and Wnt-independent activation by LEF1. TLE1, TLE2, TLE3 and TLE4 repress transactivation mediated by LEF1 and CTNNB1. Regulates T-cell receptor alpha enhancer function. Required for IL17A expressing gamma-delta T-cell maturation and development, via binding to regulator loci of BLK to modulate expression. Acts as a positive regulator of odontoblast differentiation during mesenchymal tooth germ formation, expression is repressed during the bell stage by MSX1-mediated inhibition of CTNNB1 signaling. May play a role in hair cell differentiation and follicle morphogenesis. The protein is Lymphoid enhancer-binding factor 1 of Mus musculus (Mouse).